The chain runs to 305 residues: PI-PLC X domain-containing protein 1 (305 aa).

An N-terminal signal peptide occupies residues 1–24; it reads MSMSTLRHFLWLGALLLATIQVSA. The 165-residue stretch at 25–189 folds into the PI-PLC X-box domain; the sequence is LPTAQDLICN…RLIVFVDSKA (165 aa). Active-site residues include His-53 and His-97. Asn-237 carries N-linked (GlcNAc...) asparagine glycosylation.

It localises to the secreted. The protein is PI-PLC X domain-containing protein 1 of Arthroderma benhamiae (strain ATCC MYA-4681 / CBS 112371) (Trichophyton mentagrophytes).